Consider the following 357-residue polypeptide: Protein RecA (357 aa).

74 to 81 (GPESSGKT) lines the ATP pocket.

This sequence belongs to the RecA family.

Its subcellular location is the cytoplasm. In terms of biological role, can catalyze the hydrolysis of ATP in the presence of single-stranded DNA, the ATP-dependent uptake of single-stranded DNA by duplex DNA, and the ATP-dependent hybridization of homologous single-stranded DNAs. It interacts with LexA causing its activation and leading to its autocatalytic cleavage. The protein is Protein RecA of Bordetella petrii (strain ATCC BAA-461 / DSM 12804 / CCUG 43448).